The chain runs to 476 residues: Serine/threonine-protein kinase chk-2 (476 aa).

Positions 66–127 constitute an FHA domain; it reads FVCGRGSDDA…NGTLVNQEMI (62 aa). In terms of domain architecture, Protein kinase spans 170-436; sequence HVTSHSLGKG…AVELMSTQWM (267 aa). ATP is bound by residues 177 to 184, Lys-199, and 252 to 258; these read GKGGFGKV and EYVGGGE. The active-site Proton acceptor is Asp-301. ATP is bound by residues 305–306 and Asp-322; that span reads EN.

Belongs to the protein kinase superfamily. CAMK Ser/Thr protein kinase family. CHK2 subfamily. The cofactor is Mg(2+). Highly expressed in germline tissue.

The protein localises to the nucleus. It catalyses the reaction L-seryl-[protein] + ATP = O-phospho-L-seryl-[protein] + ADP + H(+). The catalysed reaction is L-threonyl-[protein] + ATP = O-phospho-L-threonyl-[protein] + ADP + H(+). In terms of biological role, serine/threonine-protein kinase which is required for checkpoint-mediated cell cycle arrest, activation of DNA repair and apoptosis in response to the presence of DNA double-strand breaks. May also negatively regulate cell cycle progression during unperturbed cell cycles. Phosphorylates and inhibits cdc25 phosphatase, preventing entry into mitosis. Required for nuclear reorganization and homologous chromosome pairing during meiotic prophase. The sequence is that of Serine/threonine-protein kinase chk-2 (chk-2) from Caenorhabditis elegans.